A 429-amino-acid chain; its full sequence is Probable M18 family aminopeptidase 2 (429 aa).

Zn(2+) contacts are provided by histidine 82, histidine 156, and histidine 401.

Belongs to the peptidase M18 family. Zn(2+) is required as a cofactor.

The chain is Probable M18 family aminopeptidase 2 from Pseudomonas syringae pv. tomato (strain ATCC BAA-871 / DC3000).